Consider the following 702-residue polypeptide: Elongation factor G (702 aa).

A tr-type G domain is found at 8-286 (DKVRNIGIIA…AVVEYLPSPL (279 aa)). Residues 17 to 24 (AHIDAGKT), 85 to 89 (DTPGH), and 139 to 142 (NKMD) each bind GTP.

This sequence belongs to the TRAFAC class translation factor GTPase superfamily. Classic translation factor GTPase family. EF-G/EF-2 subfamily.

Its subcellular location is the cytoplasm. Its function is as follows. Catalyzes the GTP-dependent ribosomal translocation step during translation elongation. During this step, the ribosome changes from the pre-translocational (PRE) to the post-translocational (POST) state as the newly formed A-site-bound peptidyl-tRNA and P-site-bound deacylated tRNA move to the P and E sites, respectively. Catalyzes the coordinated movement of the two tRNA molecules, the mRNA and conformational changes in the ribosome. The protein is Elongation factor G of Chloroflexus aurantiacus (strain ATCC 29366 / DSM 635 / J-10-fl).